The following is a 274-amino-acid chain: ATP synthase subunit delta (274 aa).

The protein belongs to the ATPase delta chain family. In terms of assembly, F-type ATPases have 2 components, F(1) - the catalytic core - and F(0) - the membrane proton channel. F(1) has five subunits: alpha(3), beta(3), gamma(1), delta(1), epsilon(1). F(0) has three main subunits: a(1), b(2) and c(10-14). The alpha and beta chains form an alternating ring which encloses part of the gamma chain. F(1) is attached to F(0) by a central stalk formed by the gamma and epsilon chains, while a peripheral stalk is formed by the delta and b chains.

It is found in the cell membrane. Functionally, f(1)F(0) ATP synthase produces ATP from ADP in the presence of a proton or sodium gradient. F-type ATPases consist of two structural domains, F(1) containing the extramembraneous catalytic core and F(0) containing the membrane proton channel, linked together by a central stalk and a peripheral stalk. During catalysis, ATP synthesis in the catalytic domain of F(1) is coupled via a rotary mechanism of the central stalk subunits to proton translocation. This protein is part of the stalk that links CF(0) to CF(1). It either transmits conformational changes from CF(0) to CF(1) or is implicated in proton conduction. The polypeptide is ATP synthase subunit delta (Salinispora tropica (strain ATCC BAA-916 / DSM 44818 / JCM 13857 / NBRC 105044 / CNB-440)).